We begin with the raw amino-acid sequence, 410 residues long: Multifunctional CCA protein (410 aa).

Residues Gly8 and Arg11 each coordinate ATP. Gly8 and Arg11 together coordinate CTP. Asp21 and Asp23 together coordinate Mg(2+). ATP is bound by residues Arg91, Arg138, and Arg141. Arg91, Arg138, and Arg141 together coordinate CTP. Residues 229–347 form the HD domain; it reads TGVHQEMVSD…AQLALVCEAD (119 aa).

This sequence belongs to the tRNA nucleotidyltransferase/poly(A) polymerase family. Bacterial CCA-adding enzyme type 1 subfamily. Monomer. Can also form homodimers and oligomers. Mg(2+) serves as cofactor. Requires Ni(2+) as cofactor.

The enzyme catalyses a tRNA precursor + 2 CTP + ATP = a tRNA with a 3' CCA end + 3 diphosphate. The catalysed reaction is a tRNA with a 3' CCA end + 2 CTP + ATP = a tRNA with a 3' CCACCA end + 3 diphosphate. Functionally, catalyzes the addition and repair of the essential 3'-terminal CCA sequence in tRNAs without using a nucleic acid template. Adds these three nucleotides in the order of C, C, and A to the tRNA nucleotide-73, using CTP and ATP as substrates and producing inorganic pyrophosphate. tRNA 3'-terminal CCA addition is required both for tRNA processing and repair. Also involved in tRNA surveillance by mediating tandem CCA addition to generate a CCACCA at the 3' terminus of unstable tRNAs. While stable tRNAs receive only 3'-terminal CCA, unstable tRNAs are marked with CCACCA and rapidly degraded. This Xanthomonas campestris pv. campestris (strain B100) protein is Multifunctional CCA protein.